Consider the following 424-residue polypeptide: MVSQLAVKGGEALRTRPWPAWPQPAPGVPDAVADVLGSGRWSISGPYRGTESYERRFARAFAAYNGVPHCVPAASGTASLMLALEACGIGAGDEVIVPGLSWVASGSTILGVNAVPIFCDVDPDTLCLSPEAVEAAITEHTRAIVVVHLYSALADMDALSAIAERHGLPLIEDCAQAHGATYRGVKVGALATAGTFSMQHSKVLTSGEGGAVITRDEDFARRVEHLRADGRCLSAVPPAPGAMELVETGELMGNNRCLSEFQAAILAEQLTILDEQNETRRANAAHLDGLLGELGLRPQTTSDGTTSRTYYTYAVRLPDGVLEDVPVTDVSCALTAELGFPVLPSYAPIPANRLYTPHTRRRYTLGLDHERRIDPKRFALPVCEDAARRTVTLHHAALLGDADDMGDIAAAFAKVLRHGAGLMH.

Lysine 202 is subject to N6-(pyridoxal phosphate)lysine.

It belongs to the DegT/DnrJ/EryC1 family. L-glutamine:2-deoxy-scyllo-inosose/scyllo-inosose aminotransferase subfamily. It depends on pyridoxal 5'-phosphate as a cofactor.

The enzyme catalyses 2-deoxy-L-scyllo-inosose + L-glutamine = 2-deoxy-scyllo-inosamine + 2-oxoglutaramate. It catalyses the reaction 3-amino-2,3-dideoxy-scyllo-inosose + L-glutamine = 2-deoxystreptamine + 2-oxoglutaramate. Its pathway is metabolic intermediate biosynthesis; 2-deoxystreptamine biosynthesis; 2-deoxystreptamine from D-glucose 6-phosphate: step 2/4. It functions in the pathway metabolic intermediate biosynthesis; 2-deoxystreptamine biosynthesis; 2-deoxystreptamine from D-glucose 6-phosphate: step 4/4. The protein operates within antibiotic biosynthesis; ribostamycin biosynthesis. Functionally, catalyzes the PLP-dependent transamination of 2-deoxy-scyllo-inosose (2-DOI) to form 2-deoxy-scyllo-inosamine (2-DOIA) using L-glutamine as the amino donor. Also catalyzes the transamination of 3-amino-2,3-dideoxy-scyllo-inosose (keto-2-DOIA) into 2-deoxystreptamine (2-DOS). The chain is L-glutamine:2-deoxy-scyllo-inosose aminotransferase (rbmB) from Streptomyces ribosidificus.